A 465-amino-acid polypeptide reads, in one-letter code: Cysteine--tRNA ligase (465 aa).

Cys29 contacts Zn(2+). The 'HIGH' region signature appears at 31 to 41; the sequence is PTVYNYIHIGN. Zn(2+) is bound by residues Cys209, His234, and Glu238. The short motif at 266-270 is the 'KMSKS' region element; sequence KMSKS. Lys269 serves as a coordination point for ATP. The residue at position 270 (Ser270) is a Phosphoserine.

The protein belongs to the class-I aminoacyl-tRNA synthetase family. Monomer. Requires Zn(2+) as cofactor.

It localises to the cytoplasm. The enzyme catalyses tRNA(Cys) + L-cysteine + ATP = L-cysteinyl-tRNA(Cys) + AMP + diphosphate. The polypeptide is Cysteine--tRNA ligase (Anoxybacillus flavithermus (strain DSM 21510 / WK1)).